The chain runs to 371 residues: uncharacterized protein (371 aa).

The tract at residues Lys339 to His371 is disordered.

This is an uncharacterized protein from Escherichia coli (strain K12).